Consider the following 400-residue polypeptide: Elongation factor Tu 1 (400 aa).

The tr-type G domain maps to 10 to 209 (KPHLNIGTIG…AVDSYIPLPQ (200 aa)). Positions 19-26 (GHIDHGKT) are G1. Position 19 to 26 (19 to 26 (GHIDHGKT)) interacts with GTP. Thr-26 provides a ligand contact to Mg(2+). A G2 region spans residues 60–64 (GITIN). The tract at residues 81 to 84 (DCPG) is G3. GTP contacts are provided by residues 81–85 (DCPGH) and 136–139 (NKTD). The interval 136–139 (NKTD) is G4. The interval 174-176 (SAL) is G5.

The protein belongs to the TRAFAC class translation factor GTPase superfamily. Classic translation factor GTPase family. EF-Tu/EF-1A subfamily. As to quaternary structure, monomer.

Its subcellular location is the cytoplasm. The enzyme catalyses GTP + H2O = GDP + phosphate + H(+). In terms of biological role, GTP hydrolase that promotes the GTP-dependent binding of aminoacyl-tRNA to the A-site of ribosomes during protein biosynthesis. The polypeptide is Elongation factor Tu 1 (Syntrophomonas wolfei subsp. wolfei (strain DSM 2245B / Goettingen)).